A 59-amino-acid polypeptide reads, in one-letter code: Large ribosomal subunit protein uL30 (59 aa).

It belongs to the universal ribosomal protein uL30 family. As to quaternary structure, part of the 50S ribosomal subunit.

This is Large ribosomal subunit protein uL30 from Psychrobacter sp. (strain PRwf-1).